A 1100-amino-acid polypeptide reads, in one-letter code: SLIT-ROBO Rho GTPase-activating protein 2 (1100 aa).

An F-BAR domain is found at 19-324 (TQVKEIRAQL…AAENLEANSD (306 aa)). Coiled-coil stretches lie at residues 170–201 (YNMD…HEEK) and 363–400 (GELI…IQDM). Residues 181 to 203 (LKEAEKQEEKQMSRSVRHEEKQT) are compositionally biased toward basic and acidic residues. A disordered region spans residues 181-210 (LKEAEKQEEKQMSRSVRHEEKQTPRSPDSL). Residues 496 to 680 (VRKQEAIQII…TIIIHHESIF (185 aa)) form the Rho-GAP domain. The SH3 domain occupies 738-797 (SDPIEAIARFDYSGRTNRELSFKKGASLLLYSRASDDWWEGRHNGTEGLVPHQYIVVQDM). Disordered stretches follow at residues 800-835 (GYAG…TGGH) and 852-938 (EATS…PLDP). Residues 807–823 (PKADLEGSHDSVEEKVS) are compositionally biased toward basic and acidic residues. Positions 919–932 (RKSTPTGRSKSFSN) are enriched in polar residues. The stretch at 945 to 972 (EHSSQDIEATMNTALSELRELERQSNVK) forms a coiled coil. The tract at residues 986–1100 (KSGGTSEPSS…PPPTDKSCPV (115 aa)) is disordered. Polar residues-rich tracts occupy residues 987–997 (SGGTSEPSSPL) and 1008–1049 (SQHP…GSTF). Over residues 1067–1081 (SSSAGGSPAMGSPTT) the composition is skewed to low complexity. Pro residues predominate over residues 1082–1094 (TIPPTPPPPPPPT).

It localises to the cell membrane. It is found in the cell projection. Its subcellular location is the dendritic spine. The protein resides in the postsynaptic density. The protein localises to the postsynaptic cell membrane. It localises to the lamellipodium. It is found in the cytoplasmic vesicle. Its subcellular location is the phagosome. The protein resides in the nucleus. The protein localises to the cytoplasm. It localises to the cytosol. Postsynaptic RAC1 GTPase activating protein (GAP) that plays a key role in neuronal morphogenesis and migration mainly during development of the cerebral cortex. Regulates excitatory and inhibitory synapse maturation and density in cortical pyramidal neurons. Mechanistically, acts by binding and deforming membranes, thereby regulating actin dynamics to regulate cell migration and differentiation. This Danio rerio (Zebrafish) protein is SLIT-ROBO Rho GTPase-activating protein 2 (srgap2).